Here is a 567-residue protein sequence, read N- to C-terminus: uncharacterized protein (567 aa).

The disordered stretch occupies residues 1 to 26; it reads MPSEKATTRHLPGAVETLSPRTGRRP. 6 consecutive transmembrane segments (helical) span residues 57-77, 90-110, 142-162, 173-193, 221-241, and 257-277; these read AILVTNVIGLIVGAMLLTVAF, VSFGIVPGYCVLAFILGTYWL, VALAVLFLWGAAAALWTIIYG, LFSMGVIGVVAATSCYLLTEF, MLVWLLCSGVPNVGVALTAIF, and VLILWAPLLIFGFILMWILAW. In terms of domain architecture, HAMP spans 277 to 329; sequence WLTATPVRVVREALNRVEQGDLSGDLVVFDGTELGELQRGFNRMVEGLRERER. A Guanylate cyclase domain is found at 361–485; sequence AVVFVDIVGS…EPVNEAARLC (125 aa).

This sequence belongs to the adenylyl cyclase class-3 family.

The protein resides in the cell membrane. This is an uncharacterized protein from Mycobacterium bovis (strain ATCC BAA-935 / AF2122/97).